Consider the following 234-residue polypeptide: Peptidyl-prolyl cis-trans isomerase FKBP17-3, chloroplastic (234 aa).

The transit peptide at 1 to 28 directs the protein to the chloroplast; that stretch reads MATLFTATVPSHHRFVSPSQHPKQSLLS. Residues 130–228 enclose the PPIase FKBP-type domain; that stretch reads GYLVVFDVKG…DYIIEVDTVY (99 aa).

The protein belongs to the FKBP-type PPIase family.

It is found in the plastid. The protein resides in the chloroplast thylakoid lumen. It carries out the reaction [protein]-peptidylproline (omega=180) = [protein]-peptidylproline (omega=0). Its function is as follows. PPIases accelerate the folding of proteins. It catalyzes the cis-trans isomerization of proline imidic peptide bonds in oligopeptides. The protein is Peptidyl-prolyl cis-trans isomerase FKBP17-3, chloroplastic (FKBP17-3) of Arabidopsis thaliana (Mouse-ear cress).